The following is a 296-amino-acid chain: Bifunctional protein FolD 1 (296 aa).

Residues 167 to 169 and I235 contribute to the NADP(+) site; that span reads GCG.

The protein belongs to the tetrahydrofolate dehydrogenase/cyclohydrolase family. In terms of assembly, homodimer.

The enzyme catalyses (6R)-5,10-methylene-5,6,7,8-tetrahydrofolate + NADP(+) = (6R)-5,10-methenyltetrahydrofolate + NADPH. It carries out the reaction (6R)-5,10-methenyltetrahydrofolate + H2O = (6R)-10-formyltetrahydrofolate + H(+). The protein operates within one-carbon metabolism; tetrahydrofolate interconversion. In terms of biological role, catalyzes the oxidation of 5,10-methylenetetrahydrofolate to 5,10-methenyltetrahydrofolate and then the hydrolysis of 5,10-methenyltetrahydrofolate to 10-formyltetrahydrofolate. The sequence is that of Bifunctional protein FolD 1 from Nocardioides sp. (strain ATCC BAA-499 / JS614).